Reading from the N-terminus, the 343-residue chain is L-ornithine/L-arginine 3-hydroxylase (343 aa).

His147 and Glu149 together coordinate Fe cation. Polar residues predominate over residues 199–215; it reads MPDNSHLPQNTAESTGD. Residues 199–218 are disordered; it reads MPDNSHLPQNTAESTGDPTK. His302 provides a ligand contact to Fe cation. Arg316 contacts 2-oxoglutarate.

Belongs to the clavaminate synthase family. It depends on Fe(2+) as a cofactor.

The catalysed reaction is L-ornithine + 2-oxoglutarate + O2 = (3S)-3-hydroxy-L-ornithine + succinate + CO2. The enzyme catalyses L-arginine + 2-oxoglutarate + O2 = (2S,3S)-hydroxyarginine + succinate + CO2. Functionally, alpha-ketoglutarate-dependent dioxygenase that in vitro catalyzes the regio- and stereoselective hydroxylation of L-ornithine and L-arginine, leading to (3S)-3-hydroxy-L-ornithine and (3S)-3-hydroxy-L-arginine, respectively. Cannot use L-lysine, D-ornithine, or D-arginine as substrate. In Catenulispora acidiphila (strain DSM 44928 / JCM 14897 / NBRC 102108 / NRRL B-24433 / ID139908), this protein is L-ornithine/L-arginine 3-hydroxylase.